The following is a 1217-amino-acid chain: ATP-dependent helicase/nuclease subunit A (1217 aa).

Residues 10–475 form the UvrD-like helicase ATP-binding domain; the sequence is VIWTDAQWQS…IDLSQNFRSR (466 aa). Residue 31–38 coordinates ATP; that stretch reads AAAGSGKT. One can recognise a UvrD-like helicase C-terminal domain in the interval 476–786; the sequence is KEVLSTTNYI…RMMTIHSSKG (311 aa).

The protein belongs to the helicase family. AddA subfamily. Heterodimer of AddA and AddB/RexB. It depends on Mg(2+) as a cofactor.

It carries out the reaction Couples ATP hydrolysis with the unwinding of duplex DNA by translocating in the 3'-5' direction.. The catalysed reaction is ATP + H2O = ADP + phosphate + H(+). In terms of biological role, the heterodimer acts as both an ATP-dependent DNA helicase and an ATP-dependent, dual-direction single-stranded exonuclease. Recognizes the chi site generating a DNA molecule suitable for the initiation of homologous recombination. The AddA nuclease domain is required for chi fragment generation; this subunit has the helicase and 3' -&gt; 5' nuclease activities. The chain is ATP-dependent helicase/nuclease subunit A from Staphylococcus aureus (strain MRSA252).